The following is a 408-amino-acid chain: Neutral cholesterol ester hydrolase 1 (408 aa).

The Cytoplasmic portion of the chain corresponds to 1 to 4; that stretch reads MRSS. Residues 5–25 form a helical; Signal-anchor for type II membrane protein membrane-spanning segment; the sequence is CVLLAALLALVAYYVYIPLPS. Topologically, residues 26–408 are lumenal; the sequence is AVSDPWKLML…SYFKWLDQNL (383 aa). An Involved in the stabilization of the negatively charged intermediate by the formation of the oxyanion hole motif is present at residues 113–115; it reads HGG. The active site involves serine 191. Asparagine 270 carries an N-linked (GlcNAc...) asparagine glycan. Residue aspartate 348 is part of the active site. The N-linked (GlcNAc...) asparagine glycan is linked to asparagine 367. Histidine 378 is a catalytic residue. An N-linked (GlcNAc...) asparagine glycan is attached at asparagine 389.

It belongs to the 'GDXG' lipolytic enzyme family. In terms of processing, N-glycosylated.

It localises to the cell membrane. The protein localises to the microsome. The catalysed reaction is a 1-O-alkyl-2-acetyl-sn-glycerol + H2O = a 1-O-alkyl-sn-glycerol + acetate + H(+). It carries out the reaction 1-O-hexadecyl-2-acetyl-sn-glycerol + H2O = 1-O-hexadecyl-sn-glycerol + acetate + H(+). It catalyses the reaction a cholesterol ester + H2O = cholesterol + a fatty acid + H(+). The enzyme catalyses cholesteryl (9Z-octadecenoate) + H2O = cholesterol + (9Z)-octadecenoate + H(+). Its function is as follows. Hydrolyzes 2-acetyl monoalkylglycerol ether (1-O-alkyl-2-acetyl-sn-glycerol), the penultimate precursor of the pathway for de novo synthesis of platelet-activating factor. May be responsible for the hydrolysis of cholesterol esters (such as cholesteryl (9Z-octadecenoate)) in macrophages. Also involved in organ detoxification by hydrolyzing exogenous organophosphorus compounds. In Rattus norvegicus (Rat), this protein is Neutral cholesterol ester hydrolase 1 (Nceh1).